The following is a 439-amino-acid chain: Ornithine aminotransferase, mitochondrial (439 aa).

The N-terminal 25 residues, 1–25 (MFSKLAHLQRFAVLSRGVHSSVASA), are a transit peptide targeting the mitochondrion; in hepatic form. A mitochondrion; in renal form-targeting transit peptide spans 1–35 (MFSKLAHLQRFAVLSRGVHSSVASATSVATKKTVQ). Lys-49 and Lys-66 each carry N6-acetyllysine. Lys-102 bears the N6-succinyllysine mark. Lys-107 is modified (N6-acetyllysine; alternate). Position 107 is an N6-succinyllysine; alternate (Lys-107). Lys-292 bears the N6-(pyridoxal phosphate)lysine mark. At Lys-362 the chain carries N6-acetyllysine; alternate. Position 362 is an N6-succinyllysine; alternate (Lys-362). 2 positions are modified to N6-acetyllysine: Lys-386 and Lys-392. Lys-405 is modified (N6-acetyllysine; alternate). Position 405 is an N6-succinyllysine; alternate (Lys-405). The residue at position 421 (Lys-421) is an N6-acetyllysine.

It belongs to the class-III pyridoxal-phosphate-dependent aminotransferase family. As to quaternary structure, homohexamer. Requires pyridoxal 5'-phosphate as cofactor.

Its subcellular location is the mitochondrion matrix. It catalyses the reaction L-ornithine + 2-oxoglutarate = L-glutamate 5-semialdehyde + L-glutamate. The protein operates within amino-acid biosynthesis; L-proline biosynthesis; L-glutamate 5-semialdehyde from L-ornithine: step 1/1. Catalyzes the reversible interconversion of L-ornithine and 2-oxoglutarate to L-glutamate semialdehyde and L-glutamate. This chain is Ornithine aminotransferase, mitochondrial (OAT), found in Homo sapiens (Human).